Consider the following 251-residue polypeptide: Ubiquinone/menaquinone biosynthesis C-methyltransferase UbiE (251 aa).

Residues threonine 74, aspartate 95, 123–124 (NA), and serine 140 each bind S-adenosyl-L-methionine.

This sequence belongs to the class I-like SAM-binding methyltransferase superfamily. MenG/UbiE family.

The enzyme catalyses a 2-demethylmenaquinol + S-adenosyl-L-methionine = a menaquinol + S-adenosyl-L-homocysteine + H(+). The catalysed reaction is a 2-methoxy-6-(all-trans-polyprenyl)benzene-1,4-diol + S-adenosyl-L-methionine = a 5-methoxy-2-methyl-3-(all-trans-polyprenyl)benzene-1,4-diol + S-adenosyl-L-homocysteine + H(+). It participates in quinol/quinone metabolism; menaquinone biosynthesis; menaquinol from 1,4-dihydroxy-2-naphthoate: step 2/2. The protein operates within cofactor biosynthesis; ubiquinone biosynthesis. Its function is as follows. Methyltransferase required for the conversion of demethylmenaquinol (DMKH2) to menaquinol (MKH2) and the conversion of 2-polyprenyl-6-methoxy-1,4-benzoquinol (DDMQH2) to 2-polyprenyl-3-methyl-6-methoxy-1,4-benzoquinol (DMQH2). This chain is Ubiquinone/menaquinone biosynthesis C-methyltransferase UbiE, found in Proteus mirabilis (strain HI4320).